The following is a 116-amino-acid chain: Ribonuclease P protein component (116 aa).

It belongs to the RnpA family. Consists of a catalytic RNA component (M1 or rnpB) and a protein subunit.

It carries out the reaction Endonucleolytic cleavage of RNA, removing 5'-extranucleotides from tRNA precursor.. In terms of biological role, RNaseP catalyzes the removal of the 5'-leader sequence from pre-tRNA to produce the mature 5'-terminus. It can also cleave other RNA substrates such as 4.5S RNA. The protein component plays an auxiliary but essential role in vivo by binding to the 5'-leader sequence and broadening the substrate specificity of the ribozyme. In Leuconostoc citreum (strain KM20), this protein is Ribonuclease P protein component.